Reading from the N-terminus, the 187-residue chain is Ribosome-recycling factor (187 aa).

A disordered region spans residues L141–G169.

The protein belongs to the RRF family.

The protein localises to the cytoplasm. Functionally, responsible for the release of ribosomes from messenger RNA at the termination of protein biosynthesis. May increase the efficiency of translation by recycling ribosomes from one round of translation to another. The protein is Ribosome-recycling factor of Limosilactobacillus reuteri (strain DSM 20016) (Lactobacillus reuteri).